The sequence spans 197 residues: UPF0725 protein At5g41640 (197 aa).

Belongs to the UPF0725 (EMB2204) family.

The polypeptide is UPF0725 protein At5g41640 (Arabidopsis thaliana (Mouse-ear cress)).